The primary structure comprises 121 residues: Large ribosomal subunit protein bL12 (121 aa).

It belongs to the bacterial ribosomal protein bL12 family. In terms of assembly, homodimer. Part of the ribosomal stalk of the 50S ribosomal subunit. Forms a multimeric L10(L12)X complex, where L10 forms an elongated spine to which 2 to 4 L12 dimers bind in a sequential fashion. Binds GTP-bound translation factors.

Functionally, forms part of the ribosomal stalk which helps the ribosome interact with GTP-bound translation factors. Is thus essential for accurate translation. The polypeptide is Large ribosomal subunit protein bL12 (Escherichia coli O81 (strain ED1a)).